Reading from the N-terminus, the 249-residue chain is Metallo-beta-lactamase type 2 (249 aa).

An N-terminal signal peptide occupies residues 1–22 (MLKKIKISLILALGLTSLQAFG). Residues His98, His100, Asp102, His161, and Cys180 each coordinate Zn(2+). Lys183 is a binding site for substrate. His222 serves as a coordination point for Zn(2+).

The protein belongs to the metallo-beta-lactamase superfamily. Class-B beta-lactamase family. In terms of assembly, monomer. Zn(2+) serves as cofactor.

It localises to the periplasm. It catalyses the reaction a beta-lactam + H2O = a substituted beta-amino acid. Inhibited by chelating agents such as EDTA, 1-10 phenanthroline and pyridine-2,6-dicarboxylic acid. In terms of biological role, confers resistance to the different beta-lactams antibiotics (penicillin, cephalosporin and carbapenem) via the hydrolysis of the beta-lactam ring. This Elizabethkingia meningoseptica (Chryseobacterium meningosepticum) protein is Metallo-beta-lactamase type 2 (blaB1).